The primary structure comprises 394 residues: Phosphopentomutase (394 aa).

Mn(2+)-binding residues include Asp-13, Asp-286, His-291, Asp-327, His-328, and His-339.

Belongs to the phosphopentomutase family. The cofactor is Mn(2+).

Its subcellular location is the cytoplasm. It catalyses the reaction 2-deoxy-alpha-D-ribose 1-phosphate = 2-deoxy-D-ribose 5-phosphate. The enzyme catalyses alpha-D-ribose 1-phosphate = D-ribose 5-phosphate. It functions in the pathway carbohydrate degradation; 2-deoxy-D-ribose 1-phosphate degradation; D-glyceraldehyde 3-phosphate and acetaldehyde from 2-deoxy-alpha-D-ribose 1-phosphate: step 1/2. Isomerase that catalyzes the conversion of deoxy-ribose 1-phosphate (dRib-1-P) and ribose 1-phosphate (Rib-1-P) to deoxy-ribose 5-phosphate (dRib-5-P) and ribose 5-phosphate (Rib-5-P), respectively. This Bacillus anthracis (strain A0248) protein is Phosphopentomutase.